The following is a 492-amino-acid chain: WD repeat-containing protein JIP5 (492 aa).

WD repeat units lie at residues 127–166, 178–217, 236–274, 276–317, and 365–405; these read RHKG…VVKK, KKND…LSNS, RSAY…ILIS, DQED…LEDQ, and RNHS…VEEN. 2 stretches are compositionally biased toward acidic residues: residues 404–414 and 422–433; these read ENASVESDSDE and DLSDDTSSDDET. Residues 404–472 form a disordered region; it reads ENASVESDSD…SKSVKKRKIM (69 aa). Residues 449 to 462 are compositionally biased toward basic and acidic residues; sequence KDLKEDHQEEKESN.

In terms of assembly, interacts with BUD27 and GIS1.

The protein resides in the nucleus. The protein localises to the nucleolus. The protein is WD repeat-containing protein JIP5 (JIP5) of Saccharomyces cerevisiae (strain ATCC 204508 / S288c) (Baker's yeast).